The following is a 403-amino-acid chain: Nuclear receptor subfamily 2 group F member 5 (403 aa).

Positions 16–44 (PGSQLQMCSQEPGGTPGTPSGSTPGNDAL) are disordered. A DNA-binding region (nuclear receptor) is located at residues 51 to 126 (NVDCMVCGDK…VGMRREAVQR (76 aa)). 2 consecutive NR C4-type zinc fingers follow at residues 54–74 (CMVCGDKSSGKHYGQFTCEGC) and 90–114 (CRGNRDCPIDQHHRNQCQYCRLKKC). One can recognise an NR LBD domain in the interval 152-378 (YLSGFISLLL…TLLRDMLLSG (227 aa)).

It belongs to the nuclear hormone receptor family. NR2 subfamily.

It is found in the nucleus. In terms of biological role, putative receptor that is required in photoreceptor cells precursors during eye development. This Danio rerio (Zebrafish) protein is Nuclear receptor subfamily 2 group F member 5 (nr2f5).